The primary structure comprises 623 residues: uncharacterized protein (623 aa).

Residues 1 to 18 (MSSRSGSADTFTQRSDSN) are compositionally biased toward polar residues. Disordered regions lie at residues 1 to 107 (MSSR…DPFT), 132 to 181 (LGSD…EIGA), 207 to 231 (SWNL…ADTD), 298 to 349 (REET…ESDQ), 384 to 464 (RKSV…DRNV), 533 to 553 (SIND…PPET), and 568 to 623 (VESR…TKGD). The segment covering 25 to 34 (ISLDDVRDNN) has biased composition (basic and acidic residues). Low complexity predominate over residues 39 to 49 (SSSGISTTGSS). Polar residues predominate over residues 132–144 (LGSDTARPTSNGG). The segment covering 165–177 (STSTWGPSGPTTP) has biased composition (low complexity). Over residues 328 to 339 (EKSTFSRISEQP) the composition is skewed to polar residues. A compositionally biased stretch (low complexity) spans 400–417 (QTPTISTASSPIQPSSSP). Over residues 533–548 (SINDLQQGTSSSQNQA) the composition is skewed to polar residues. Positions 604–614 (PSASPSTSRTR) are enriched in low complexity.

This is an uncharacterized protein from Emericella nidulans (strain FGSC A4 / ATCC 38163 / CBS 112.46 / NRRL 194 / M139) (Aspergillus nidulans).